An 879-amino-acid chain; its full sequence is Alanine--tRNA ligase (879 aa).

Zn(2+) is bound by residues His-566, His-570, Cys-668, and His-672.

Belongs to the class-II aminoacyl-tRNA synthetase family. Zn(2+) is required as a cofactor.

Its subcellular location is the cytoplasm. The enzyme catalyses tRNA(Ala) + L-alanine + ATP = L-alanyl-tRNA(Ala) + AMP + diphosphate. In terms of biological role, catalyzes the attachment of alanine to tRNA(Ala) in a two-step reaction: alanine is first activated by ATP to form Ala-AMP and then transferred to the acceptor end of tRNA(Ala). Also edits incorrectly charged Ser-tRNA(Ala) and Gly-tRNA(Ala) via its editing domain. In Halalkalibacterium halodurans (strain ATCC BAA-125 / DSM 18197 / FERM 7344 / JCM 9153 / C-125) (Bacillus halodurans), this protein is Alanine--tRNA ligase.